The primary structure comprises 27 residues: uncharacterized protein (27 aa).

It localises to the mitochondrion. This is an uncharacterized protein from Emericella nidulans (Aspergillus nidulans).